The sequence spans 131 residues: Small ribosomal subunit protein uS8 (131 aa).

This sequence belongs to the universal ribosomal protein uS8 family. In terms of assembly, part of the 30S ribosomal subunit. Contacts proteins S5 and S12.

One of the primary rRNA binding proteins, it binds directly to 16S rRNA central domain where it helps coordinate assembly of the platform of the 30S subunit. The polypeptide is Small ribosomal subunit protein uS8 (Parabacteroides distasonis (strain ATCC 8503 / DSM 20701 / CIP 104284 / JCM 5825 / NCTC 11152)).